The sequence spans 714 residues: BBSome complex member bbs-2 (714 aa).

Coiled coils occupy residues 332–361 (IREF…VEKD) and 597–627 (MTEV…DSIA).

As to quaternary structure, part of BBSome complex, that contains at least bbs-1, bbs-2, bbs-4, bbs-5, osm-12, bbs-8/ttc-8 and bbs-9. Expressed in ciliated cells including amphid and both inner and outer labial neurons of the head and in both phasmid neurons PHA and PHB in the tail at larval stages L1 and L2.

The protein resides in the cell projection. It localises to the cilium. It is found in the cytoplasm. Its subcellular location is the cytoskeleton. The protein localises to the cilium basal body. The protein resides in the cilium axoneme. Component of the BBSome complex. The BBSome complex is thought to function as a coat complex required for sorting of specific membrane proteins to the primary cilia. The BBSome complex is required for ciliogenesis but is dispensable for centriolar satellite function. Required for proper BBSome complex assembly and its ciliary localization. Required for cilia biogenesis and both the assembly and movement of intraflagellar transport proteins along the ciliary axoneme. This is BBSome complex member bbs-2 from Caenorhabditis elegans.